We begin with the raw amino-acid sequence, 230 residues long: ATP synthase subunit a (230 aa).

The next 6 helical transmembrane spans lie at 26-46 (ANAVVYTWTVIVLLLVLSLIA), 83-103 (FFPLIATLAIFILVSNLVGLI), 112-132 (NVNTTAACAIVVFLATHVVGI), 143-163 (FMGPIWWLAPLMFFIEVIGHL), 182-202 (LVLMIFFALAPFLVPLPMMLM), and 203-223 (GVLVSFIQAFVFMLLAMIYIQ).

This sequence belongs to the ATPase A chain family. In terms of assembly, F-type ATPases have 2 components, CF(1) - the catalytic core - and CF(0) - the membrane proton channel. CF(1) has five subunits: alpha(3), beta(3), gamma(1), delta(1), epsilon(1). CF(0) has three main subunits: a(1), b(2) and c(9-12). The alpha and beta chains form an alternating ring which encloses part of the gamma chain. CF(1) is attached to CF(0) by a central stalk formed by the gamma and epsilon chains, while a peripheral stalk is formed by the delta and b chains.

Its subcellular location is the cell inner membrane. Functionally, key component of the proton channel; it plays a direct role in the translocation of protons across the membrane. This chain is ATP synthase subunit a, found in Trichlorobacter lovleyi (strain ATCC BAA-1151 / DSM 17278 / SZ) (Geobacter lovleyi).